We begin with the raw amino-acid sequence, 283 residues long: Probable endonuclease 4 (283 aa).

9 residues coordinate Zn(2+): histidine 69, histidine 109, glutamate 145, aspartate 179, histidine 182, histidine 216, aspartate 229, histidine 231, and glutamate 261.

The protein belongs to the AP endonuclease 2 family. It depends on Zn(2+) as a cofactor.

It carries out the reaction Endonucleolytic cleavage to 5'-phosphooligonucleotide end-products.. Its function is as follows. Endonuclease IV plays a role in DNA repair. It cleaves phosphodiester bonds at apurinic or apyrimidinic (AP) sites, generating a 3'-hydroxyl group and a 5'-terminal sugar phosphate. This is Probable endonuclease 4 from Campylobacter curvus (strain 525.92).